Reading from the N-terminus, the 297-residue chain is Homoserine kinase (297 aa).

79–89 (PIARGLGSSGA) serves as a coordination point for ATP.

This sequence belongs to the GHMP kinase family. Homoserine kinase subfamily.

The protein localises to the cytoplasm. The enzyme catalyses L-homoserine + ATP = O-phospho-L-homoserine + ADP + H(+). It participates in amino-acid biosynthesis; L-threonine biosynthesis; L-threonine from L-aspartate: step 4/5. Catalyzes the ATP-dependent phosphorylation of L-homoserine to L-homoserine phosphate. The chain is Homoserine kinase from Pyrobaculum neutrophilum (strain DSM 2338 / JCM 9278 / NBRC 100436 / V24Sta) (Thermoproteus neutrophilus).